A 195-amino-acid chain; its full sequence is Imidazoleglycerol-phosphate dehydratase (195 aa).

The protein belongs to the imidazoleglycerol-phosphate dehydratase family.

Its subcellular location is the cytoplasm. The catalysed reaction is D-erythro-1-(imidazol-4-yl)glycerol 3-phosphate = 3-(imidazol-4-yl)-2-oxopropyl phosphate + H2O. It participates in amino-acid biosynthesis; L-histidine biosynthesis; L-histidine from 5-phospho-alpha-D-ribose 1-diphosphate: step 6/9. This chain is Imidazoleglycerol-phosphate dehydratase, found in Geobacillus kaustophilus (strain HTA426).